The chain runs to 135 residues: Retinol-binding protein 1 (135 aa).

The tract at residues 22 to 32 is important for interaction with STRA6; that stretch reads RALDVNVALRK. Positions 41, 63, and 109 each coordinate all-trans-retinol.

Belongs to the calycin superfamily. Fatty-acid binding protein (FABP) family. In terms of assembly, interacts (only as retinol-free apoprotein) with STRA6.

The protein resides in the cytoplasm. It localises to the lipid droplet. Functionally, cytoplasmic retinol-binding protein. Accepts retinol from the transport protein STRA6, and thereby contributes to retinol uptake, storage and retinoid homeostasis. The sequence is that of Retinol-binding protein 1 (Rbp1) from Mus musculus (Mouse).